The chain runs to 166 residues: Phospholipase A2 inhibitor (166 aa).

A signal peptide spans 1–19 (MRLILLSGLLLLGIFLANG). Positions 46–161 (LKGSFLIVHK…CDDNLLVVCE (116 aa)) constitute a C-type lectin domain. Intrachain disulfides connect C83/C160 and C138/C152. N-linked (GlcNAc...) asparagine glycosylation is present at N122.

It belongs to the alpha-type phospholipase A2 inhibitor family. In terms of assembly, homotrimer; non-covalently linked. Expressed by the liver.

Its subcellular location is the secreted. Functionally, this phospholipase A2 inhibitor binds directly phospholipase A2 in the presence or absence of calcium. This is Phospholipase A2 inhibitor from Bothrops jararacussu (Jararacussu).